Consider the following 146-residue polypeptide: MKLHELHSAEGSRRNRKRVGRGTSSGYGKTSGRGQKGQLARQGGHTRLGFEGGQMPLFRTMPKRGFKNINRKEYAIVNLDDLNKFNDGSEVTVETLKENGLVKKELSGVKLLGNGELKVKLTVKVNKVSAAAKKAVEAAGGTVEVI.

Basic and acidic residues predominate over residues 1–13; the sequence is MKLHELHSAEGSR. A disordered region spans residues 1–55; the sequence is MKLHELHSAEGSRRNRKRVGRGTSSGYGKTSGRGQKGQLARQGGHTRLGFEGGQM. The span at 23–35 shows a compositional bias: gly residues; sequence TSSGYGKTSGRGQ.

This sequence belongs to the universal ribosomal protein uL15 family. Part of the 50S ribosomal subunit.

In terms of biological role, binds to the 23S rRNA. The chain is Large ribosomal subunit protein uL15 from Lactobacillus helveticus (strain DPC 4571).